We begin with the raw amino-acid sequence, 230 residues long: V-type proton ATPase subunit E (230 aa).

The protein belongs to the V-ATPase E subunit family. In terms of assembly, V-ATPase is a heteromultimeric enzyme composed of a peripheral catalytic V1 complex (components A to H) attached to an integral membrane V0 proton pore complex (components: a, c, c', c'', d, e, f and VOA1).

The protein localises to the vacuole membrane. Subunit of the V1 complex of vacuolar(H+)-ATPase (V-ATPase), a multisubunit enzyme composed of a peripheral complex (V1) that hydrolyzes ATP and a membrane integral complex (V0) that translocates protons. V-ATPase is responsible for acidifying and maintaining the pH of intracellular compartments. This chain is V-type proton ATPase subunit E, found in Neurospora crassa (strain ATCC 24698 / 74-OR23-1A / CBS 708.71 / DSM 1257 / FGSC 987).